A 149-amino-acid polypeptide reads, in one-letter code: Arginine repressor (149 aa).

This sequence belongs to the ArgR family.

The protein resides in the cytoplasm. It participates in amino-acid biosynthesis; L-arginine biosynthesis [regulation]. The protein operates within amino-acid degradation; L-arginine degradation via ADI pathway. Functionally, regulates arginine biosynthesis genes and activates arginine deiminase pathway genes. The polypeptide is Arginine repressor (argR) (Bacillus licheniformis (strain ATCC 14580 / DSM 13 / JCM 2505 / CCUG 7422 / NBRC 12200 / NCIMB 9375 / NCTC 10341 / NRRL NRS-1264 / Gibson 46)).